A 324-amino-acid chain; its full sequence is Stomatin-like protein stl-1 (324 aa).

Belongs to the band 7/mec-2 family. Widely expressed in most tissues, including body wall muscles, intestinal epithelia, and pharynx and head neurons.

The protein resides in the mitochondrion. Functionally, mitochondrial protein that probably regulates the biogenesis and the activity of mitochondria. In neurons, involved in mitochondrial fusion and recovery of normal locomotory behavior during reoxygenation; probably acts independently of egl-9 and the canonical hypoxia response pathway. The polypeptide is Stomatin-like protein stl-1 (Caenorhabditis elegans).